The following is a 316-amino-acid chain: 4-diphosphocytidyl-2-C-methyl-D-erythritol kinase (316 aa).

Residue Lys-23 is part of the active site. Residue 108-118 (PVAGGMAGGSA) coordinates ATP. The active site involves Asp-150.

Belongs to the GHMP kinase family. IspE subfamily.

The enzyme catalyses 4-CDP-2-C-methyl-D-erythritol + ATP = 4-CDP-2-C-methyl-D-erythritol 2-phosphate + ADP + H(+). It functions in the pathway isoprenoid biosynthesis; isopentenyl diphosphate biosynthesis via DXP pathway; isopentenyl diphosphate from 1-deoxy-D-xylulose 5-phosphate: step 3/6. Its function is as follows. Catalyzes the phosphorylation of the position 2 hydroxy group of 4-diphosphocytidyl-2C-methyl-D-erythritol. This is 4-diphosphocytidyl-2-C-methyl-D-erythritol kinase from Mycobacterium avium (strain 104).